A 184-amino-acid chain; its full sequence is Late embryogenesis abundant protein (184 aa).

The tract at residues 49–184 is disordered; it reads TGNIAEYPTE…KLPGHHNHHP (136 aa). The segment covering 60–86 has biased composition (low complexity); sequence PPAGVAAGTGAAATTAAGVTTSETTTG. 2 stretches are compositionally biased toward basic and acidic residues: residues 87 to 98 and 122 to 138; these read QEHHGSLGEHLR and KDKIKDKLGGGKHKDEQ. The segment covering 139–159 has biased composition (low complexity); that stretch reads TPTTATTTGPTTTTTTTGAAA. Positions 160 to 177 are enriched in basic and acidic residues; it reads DQHHEKKGILEKIKEKLP.

It belongs to the plant dehydrin family.

Functionally, LEA protein are late embryogenesis abundant in higher plant seed embryos. There are two subsets of LEA proteins (5a, and 5b), the first ones are expressed when the cotyledon weight reach 80 mg and the second set are expressed above 100 mg. The function of those proteins is not known. The sequence is that of Late embryogenesis abundant protein from Raphanus sativus (Radish).